We begin with the raw amino-acid sequence, 873 residues long: Alanine--tRNA ligase (873 aa).

Zn(2+) contacts are provided by H562, H566, C663, and H667.

This sequence belongs to the class-II aminoacyl-tRNA synthetase family. The cofactor is Zn(2+).

The protein resides in the cytoplasm. It catalyses the reaction tRNA(Ala) + L-alanine + ATP = L-alanyl-tRNA(Ala) + AMP + diphosphate. Functionally, catalyzes the attachment of alanine to tRNA(Ala) in a two-step reaction: alanine is first activated by ATP to form Ala-AMP and then transferred to the acceptor end of tRNA(Ala). Also edits incorrectly charged Ser-tRNA(Ala) and Gly-tRNA(Ala) via its editing domain. The protein is Alanine--tRNA ligase of Bordetella petrii (strain ATCC BAA-461 / DSM 12804 / CCUG 43448).